We begin with the raw amino-acid sequence, 387 residues long: Succinate--CoA ligase [ADP-forming] subunit beta (387 aa).

The 228-residue stretch at 9–236 folds into the ATP-grasp domain; sequence KELFAKHNVP…RDATDPLELK (228 aa). ATP is bound by residues Lys45, 52-54, Ser94, and Glu99; that span reads GRG. Residues Asn191 and Asp205 each coordinate Mg(2+). Residues Asn256 and 318-320 each bind substrate; that span reads GIT.

It belongs to the succinate/malate CoA ligase beta subunit family. In terms of assembly, heterotetramer of two alpha and two beta subunits. Mg(2+) serves as cofactor.

It catalyses the reaction succinate + ATP + CoA = succinyl-CoA + ADP + phosphate. The catalysed reaction is GTP + succinate + CoA = succinyl-CoA + GDP + phosphate. It participates in carbohydrate metabolism; tricarboxylic acid cycle; succinate from succinyl-CoA (ligase route): step 1/1. Functionally, succinyl-CoA synthetase functions in the citric acid cycle (TCA), coupling the hydrolysis of succinyl-CoA to the synthesis of either ATP or GTP and thus represents the only step of substrate-level phosphorylation in the TCA. The beta subunit provides nucleotide specificity of the enzyme and binds the substrate succinate, while the binding sites for coenzyme A and phosphate are found in the alpha subunit. The polypeptide is Succinate--CoA ligase [ADP-forming] subunit beta (Mycobacterium sp. (strain JLS)).